The chain runs to 616 residues: TAF6-like RNA polymerase II p300/CBP-associated factor-associated factor 65 kDa subunit 6L (616 aa).

Disordered regions lie at residues 399-432 (SLLL…EDPS) and 455-539 (FGTG…GTRD). Phosphoserine is present on residues Ser494 and Ser500. 3 positions are modified to asymmetric dimethylarginine: Arg549, Arg555, and Arg587.

This sequence belongs to the TAF6 family. In terms of assembly, the PCAF complex is composed of a number of TBP-associated factors (TAFS), such as TAF5, TAF5L, TAF6, TAF6L, TAF9, TAF10 and TAF12, PCAF, and also PCAF-associated factors (PAFs), such as TADA2L/ADA2, TADA3L/ADA3 and SPT3. Component of the STAGA transcription coactivator-HAT complex, at least composed of SUPT3H, GCN5L2, TAF5L, TAF6L, SUPT7L, TADA3L, TAD1L, TAF10, TAF12, TRRAP and TAF9.

Its subcellular location is the nucleus. In terms of biological role, functions as a component of the PCAF complex. The PCAF complex is capable of efficiently acetylating histones in a nucleosomal context. The PCAF complex could be considered as the human version of the yeast SAGA complex. With TAF5L, acts as an epigenetic regulator essential for somatic reprogramming. Regulates target genes through H3K9ac deposition and MYC recruitment which trigger MYC regulatory network to orchestrate gene expression programs to control embryonic stem cell state. Functions with MYC to activate target gene expression through RNA polymerase II pause release. The chain is TAF6-like RNA polymerase II p300/CBP-associated factor-associated factor 65 kDa subunit 6L from Mus musculus (Mouse).